We begin with the raw amino-acid sequence, 1045 residues long: FERM, ARHGEF and pleckstrin domain-containing protein 1 (1045 aa).

The tract at residues 1-37 (MGEIEQRPTPGSRLGAPENSGISTLERGQKPPPTPSG) is disordered. Serine 20 and serine 23 each carry phosphoserine. Threonine 24 is modified (phosphothreonine). Residues 40–320 (VSIKIQMLDD…EHHAFFRLFE (281 aa)) form the FERM domain. A phosphoserine mark is found at serine 340, serine 373, serine 389, serine 403, serine 418, serine 427, and serine 433. Residues 361 to 534 (FERKHSKIHS…TDDEDEGRRK (174 aa)) are disordered. Over residues 373 to 396 (SLASQPTELNSEVLEQSQQSTSLT) the composition is skewed to polar residues. 2 stretches are compositionally biased toward polar residues: residues 471 to 489 (TGSLTGSPHLSELSVNSQG) and 496 to 511 (VTLSPNLSPDTKQASP). A phosphoserine mark is found at serine 510 and serine 514. The 191-residue stretch at 540–730 (KAYFIAKEVS…TEMVAQLHGT (191 aa)) folds into the DH domain. In terms of domain architecture, PH 1 spans 759–856 (EFIRLGSLSK…WVEDIQMAID (98 aa)). Phosphoserine is present on residues serine 833, serine 872, and serine 878. The tract at residues 864–903 (PAPEFLASSPPDNKSPDEATAADQESEDDLSASRTSLERQ) is disordered. At threonine 883 the chain carries Phosphothreonine. Phosphoserine occurs at positions 889, 896, and 899. Positions 932–1029 (ENQLSGNLLR…WMEVIRSATS (98 aa)) constitute a PH 2 domain.

In terms of assembly, interacts with CADM1. Interacts with RAC1. In terms of tissue distribution, detected in cAMP-treated chondrocytes, but not in untreated chondrocytes. Detected in fetal brain, heart and spleen, and in adult testis, kidney and lung.

The protein resides in the cell membrane. It is found in the synapse. The protein localises to the synaptosome. Its subcellular location is the cytoplasm. It localises to the cytosol. The protein resides in the cell projection. It is found in the filopodium. The protein localises to the dendrite. Its subcellular location is the dendritic spine. Its function is as follows. Functions as a guanine nucleotide exchange factor for RAC1. May play a role in semaphorin signaling. Plays a role in the assembly and disassembly of dendritic filopodia, the formation of dendritic spines, regulation of dendrite length and ultimately the formation of synapses. This Homo sapiens (Human) protein is FERM, ARHGEF and pleckstrin domain-containing protein 1 (FARP1).